Here is a 340-residue protein sequence, read N- to C-terminus: MKRSLEQIARLVSGRVVGDAAKKVSGAAPFEQAGPEEITLAGSAGFLKRIDQTGAGALVVPTDFTDSRRNLVAVENPAAAFARIRQMFDTGCRQPVGIDPRAVIGGGFACGEDVSIGPGVVIGDHVTLGDRVLLYPGVFLGNHVRIGNDGIIHANTSILRECVLGNRVIIHAGSVIGSDGFGFAPDGEMYVKIPHSGMVQIDDDVEIGAGNAIDRATFGRTWIRQGVKTDNLVHIAHNVTVGENTIIVAQVGIAGSTTVGRHVILAGQAGISGHLDIGDNAVVGPQAGIVKSIKPGETVSGTPGMPHKLWLRAQSIVAGLPGMRKKIAELEKRLAVLEKG.

The active-site Proton acceptor is the His-237.

This sequence belongs to the transferase hexapeptide repeat family. LpxD subfamily. Homotrimer.

The catalysed reaction is a UDP-3-O-[(3R)-3-hydroxyacyl]-alpha-D-glucosamine + a (3R)-hydroxyacyl-[ACP] = a UDP-2-N,3-O-bis[(3R)-3-hydroxyacyl]-alpha-D-glucosamine + holo-[ACP] + H(+). The protein operates within bacterial outer membrane biogenesis; LPS lipid A biosynthesis. In terms of biological role, catalyzes the N-acylation of UDP-3-O-acylglucosamine using 3-hydroxyacyl-ACP as the acyl donor. Is involved in the biosynthesis of lipid A, a phosphorylated glycolipid that anchors the lipopolysaccharide to the outer membrane of the cell. The polypeptide is UDP-3-O-acylglucosamine N-acyltransferase (Desulfosudis oleivorans (strain DSM 6200 / JCM 39069 / Hxd3) (Desulfococcus oleovorans)).